Here is a 416-residue protein sequence, read N- to C-terminus: MVMDEEKQAIVSSSSSSQRKRRYKKLMIASSSLPDDVVEEIFLKLPVKALMRFKSLSKQWRSTLESCYFSQRHLKIAERSHVDHPKVMIITEKWNPDIEISFRTISLESVSFLSSALFNFPRGFHHPIYASESCDGIFCIHSPKTQDIYVVNPATRWFRQLPPARFQIFMHKLNPTLDTLRDMIPVNHLAFVKATDYKLVWLYNSDASRVTKCEVFDFKANAWRYLTCIPSYRIYHDQKPASANGTLYWFTETYNAEIKVIALDIHTEIFRLLPKPSLIASSEPSHIDMCIIDNSLCMYETEGDKKIIQEIWRLKSSEDAWEKIYTINLLSSSYCHFHVLDGYNLTRLCYWTQKDLVESSTPVAIYKDKKIILSHRYTCNLGKRLEVLELHAKLSNIPCPKASICKRDALLVHRAI.

In terms of domain architecture, F-box spans 27-76; it reads MIASSSLPDDVVEEIFLKLPVKALMRFKSLSKQWRSTLESCYFSQRHLKI. 2 Kelch repeats span residues 199 to 243 and 297 to 341; these read LVWL…PASA and CMYE…HVLD.

The polypeptide is Putative F-box/kelch-repeat protein At1g12870 (Arabidopsis thaliana (Mouse-ear cress)).